The primary structure comprises 469 residues: tRNA(Ile)-lysidine synthase (469 aa).

26–31 (SGGPDS) contributes to the ATP binding site.

It belongs to the tRNA(Ile)-lysidine synthase family.

Its subcellular location is the cytoplasm. It carries out the reaction cytidine(34) in tRNA(Ile2) + L-lysine + ATP = lysidine(34) in tRNA(Ile2) + AMP + diphosphate + H(+). In terms of biological role, ligates lysine onto the cytidine present at position 34 of the AUA codon-specific tRNA(Ile) that contains the anticodon CAU, in an ATP-dependent manner. Cytidine is converted to lysidine, thus changing the amino acid specificity of the tRNA from methionine to isoleucine. The chain is tRNA(Ile)-lysidine synthase from Shouchella clausii (strain KSM-K16) (Alkalihalobacillus clausii).